Reading from the N-terminus, the 890-residue chain is Translation initiation factor IF-2 (890 aa).

The segment at 45–304 is disordered; that stretch reads LIDHLNQKNS…LQQGFQKPAQ (260 aa). The span at 67–81 shows a compositional bias: polar residues; it reads STLNIPGTGGKSKSV. Residues 92–217 are compositionally biased toward basic and acidic residues; that stretch reads VKRDPQEAER…RMAEENKWTD (126 aa). Positions 252-266 are enriched in basic residues; the sequence is GRGRNAKAARPKKGN. Residues 267–280 are compositionally biased toward basic and acidic residues; it reads KHAESKADREEARA. A tr-type G domain is found at 389-558; sequence PRAPVVTIMG…LLQAEVLELK (170 aa). The G1 stretch occupies residues 398–405; it reads GHVDHGKT. 398 to 405 contacts GTP; that stretch reads GHVDHGKT. The tract at residues 423 to 427 is G2; that stretch reads GITQH. The tract at residues 444-447 is G3; that stretch reads DTPG. GTP contacts are provided by residues 444–448 and 498–501; these read DTPGH and NKID. Residues 498 to 501 form a G4 region; that stretch reads NKID. Residues 534–536 are G5; that stretch reads SAK. K808 is modified (N6-acetyllysine).

This sequence belongs to the TRAFAC class translation factor GTPase superfamily. Classic translation factor GTPase family. IF-2 subfamily.

Its subcellular location is the cytoplasm. Functionally, one of the essential components for the initiation of protein synthesis. Protects formylmethionyl-tRNA from spontaneous hydrolysis and promotes its binding to the 30S ribosomal subunits. Also involved in the hydrolysis of GTP during the formation of the 70S ribosomal complex. The protein is Translation initiation factor IF-2 of Escherichia coli O127:H6 (strain E2348/69 / EPEC).